A 467-amino-acid polypeptide reads, in one-letter code: Phosphomethylpyrimidine synthase (467 aa).

Substrate-binding positions include N80, M109, Y139, H175, 195-197 (SRG), 236-239 (DSLR), and E275. H279 contacts Zn(2+). Substrate is bound at residue Y302. H343 contributes to the Zn(2+) binding site. Residues C423, C426, and C431 each coordinate [4Fe-4S] cluster.

Belongs to the ThiC family. Requires [4Fe-4S] cluster as cofactor.

The enzyme catalyses 5-amino-1-(5-phospho-beta-D-ribosyl)imidazole + S-adenosyl-L-methionine = 4-amino-2-methyl-5-(phosphooxymethyl)pyrimidine + CO + 5'-deoxyadenosine + formate + L-methionine + 3 H(+). It functions in the pathway cofactor biosynthesis; thiamine diphosphate biosynthesis. Catalyzes the synthesis of the hydroxymethylpyrimidine phosphate (HMP-P) moiety of thiamine from aminoimidazole ribotide (AIR) in a radical S-adenosyl-L-methionine (SAM)-dependent reaction. The sequence is that of Phosphomethylpyrimidine synthase from Synechococcus sp. (strain WH7803).